A 236-amino-acid chain; its full sequence is MKKKLYEGSSKILYSAEEDFLLIMAFSDKAILETGEIVDISGKGVLNNNISSFLMDKLEMIGIENHFIEKINMREQLIQYVEVFPIQVIISSVACSRFVKEFGIDEGYVFDKPIIDFKVRSREFKYPIVNEYQILNFGWLTRDEIKAVKEQALRIYDFLSGLFIGVGIRLVECKLEFGRVFNGEESIIMLTDEISPDNCRLWHINSNEKLGFELLEKEPNKVFESYQLIADRLKEK.

Belongs to the SAICAR synthetase family.

It carries out the reaction 5-amino-1-(5-phospho-D-ribosyl)imidazole-4-carboxylate + L-aspartate + ATP = (2S)-2-[5-amino-1-(5-phospho-beta-D-ribosyl)imidazole-4-carboxamido]succinate + ADP + phosphate + 2 H(+). The protein operates within purine metabolism; IMP biosynthesis via de novo pathway; 5-amino-1-(5-phospho-D-ribosyl)imidazole-4-carboxamide from 5-amino-1-(5-phospho-D-ribosyl)imidazole-4-carboxylate: step 1/2. This Rickettsia africae (strain ESF-5) protein is Phosphoribosylaminoimidazole-succinocarboxamide synthase.